The following is a 390-amino-acid chain: MPPSGLRLLPLLLPLLWLLMLTPGRPVAGLSTCKTIDMELVKRKGIEAIRGQILSKLRLASPPSQGDVPPGPLPEAILALYNSTRDRVAGESAETEPEPEADYYAKEVTRVLMVEYGNKIYDKMKSSSHSIYMFFNTSELREAVPEPVLLSRADVRLLRLKLKVEQHVELYQKYSNNSWRYLSNRLLAPSDSPEWLSFDVTGVVRQWLTHREEIEGFRLSAHCSCDSKDNTLQVDINGFSSGRRGDLATIHGMNRPFLLLMATPLERAQHLHSSRHRRALDTNYCFSSTEKNCCVRQLYIDFRKDLGWKWIHEPKGYHANFCLGPCPYIWSLDTQYSKVLALYNQHNPGASAAPCCVPQALEPLPIVYYVGRKPKVEQLSNMIVRSCKCS.

A signal peptide spans 1–29 (MPPSGLRLLPLLLPLLWLLMLTPGRPVAG). Residues 30 to 74 (LSTCKTIDMELVKRKGIEAIRGQILSKLRLASPPSQGDVPPGPLP) are straightjacket domain. Residues 75 to 271 (EAILALYNST…ATPLERAQHL (197 aa)) are arm domain. Asn-82, Asn-136, and Asn-176 each carry an N-linked (GlcNAc...) asparagine glycan. Positions 226-252 (DSKDNTLQVDINGFSSGRRGDLATIHG) are bowtie tail. A Cell attachment site motif is present at residues 244–246 (RGD). Cystine bridges form between Cys-285–Cys-294, Cys-293–Cys-356, Cys-322–Cys-387, and Cys-326–Cys-389.

The protein belongs to the TGF-beta family. In terms of assembly, homodimer; disulfide-linked. Interacts with the serine proteases, HTRA1 and HTRA3: the interaction with either inhibits TGFB1-mediated signaling and the HTRA protease activity is required for this inhibition. May interact with THSD4; this interaction may lead to sequestration by FBN1 microfibril assembly and attenuation of TGFB signaling. Interacts with CD109, DPT and ASPN. Interacts with EFEMP2. Interacts with TSKU; the interaction contributes to regulation of the hair cycle. Interacts with TGFBR3. Homodimer; disulfide-linked. Interacts with transforming growth factor beta-1 (TGF-beta-1) chain; interaction is non-covalent and maintains TGF-beta-1 in a latent state; each latency-associated peptide (LAP) monomer interacts with TGF-beta-1 in the other monomer. Interacts with LTBP1; leading to regulation of TGF-beta-1 activation. Interacts with LRRC32/GARP; leading to regulation of TGF-beta-1 activation on the surface of activated regulatory T-cells (Tregs). Interacts with LRRC33/NRROS; leading to regulation of TGF-beta-1 activation in macrophages and microglia. Interacts (via cell attachment site) with integrins ITGAV and ITGB6 (ITGAV:ITGB6), leading to release of the active TGF-beta-1. Interacts with NREP; the interaction results in a decrease in TGFB1 autoinduction. Interacts with HSP90AB1; inhibits latent TGFB1 activation. As to quaternary structure, homodimer; disulfide-linked. Interacts with TGF-beta receptors (TGFBR1 and TGFBR2), leading to signal transduction. Post-translationally, transforming growth factor beta-1 proprotein: The precursor proprotein is cleaved in the Golgi apparatus by FURIN to form Transforming growth factor beta-1 (TGF-beta-1) and Latency-associated peptide (LAP) chains, which remain non-covalently linked, rendering TGF-beta-1 inactive. In terms of processing, N-glycosylated. Deglycosylation leads to activation of Transforming growth factor beta-1 (TGF-beta-1); mechanisms triggering deglycosylation-driven activation of TGF-beta-1 are however unclear.

The protein localises to the secreted. It localises to the extracellular space. The protein resides in the extracellular matrix. In terms of biological role, transforming growth factor beta-1 proprotein: Precursor of the Latency-associated peptide (LAP) and Transforming growth factor beta-1 (TGF-beta-1) chains, which constitute the regulatory and active subunit of TGF-beta-1, respectively. Its function is as follows. Required to maintain the Transforming growth factor beta-1 (TGF-beta-1) chain in a latent state during storage in extracellular matrix. Associates non-covalently with TGF-beta-1 and regulates its activation via interaction with 'milieu molecules', such as LTBP1, LRRC32/GARP and LRRC33/NRROS, that control activation of TGF-beta-1. Interaction with LRRC33/NRROS regulates activation of TGF-beta-1 in macrophages and microglia. Interaction with LRRC32/GARP controls activation of TGF-beta-1 on the surface of activated regulatory T-cells (Tregs). Interaction with integrins (ITGAV:ITGB6 or ITGAV:ITGB8) results in distortion of the Latency-associated peptide chain and subsequent release of the active TGF-beta-1. Functionally, multifunctional protein that regulates the growth and differentiation of various cell types and is involved in various processes, such as normal development, immune function, microglia function and responses to neurodegeneration. Activation into mature form follows different steps: following cleavage of the proprotein in the Golgi apparatus, Latency-associated peptide (LAP) and Transforming growth factor beta-1 (TGF-beta-1) chains remain non-covalently linked rendering TGF-beta-1 inactive during storage in extracellular matrix. At the same time, LAP chain interacts with 'milieu molecules', such as LTBP1, LRRC32/GARP and LRRC33/NRROS that control activation of TGF-beta-1 and maintain it in a latent state during storage in extracellular milieus. TGF-beta-1 is released from LAP by integrins (ITGAV:ITGB6 or ITGAV:ITGB8): integrin-binding to LAP stabilizes an alternative conformation of the LAP bowtie tail and results in distortion of the LAP chain and subsequent release of the active TGF-beta-1. Once activated following release of LAP, TGF-beta-1 acts by binding to TGF-beta receptors (TGFBR1 and TGFBR2), which transduce signal. While expressed by many cells types, TGF-beta-1 only has a very localized range of action within cell environment thanks to fine regulation of its activation by Latency-associated peptide chain (LAP) and 'milieu molecules'. Plays an important role in bone remodeling: acts as a potent stimulator of osteoblastic bone formation, causing chemotaxis, proliferation and differentiation in committed osteoblasts. Can promote either T-helper 17 cells (Th17) or regulatory T-cells (Treg) lineage differentiation in a concentration-dependent manner. At high concentrations, leads to FOXP3-mediated suppression of RORC and down-regulation of IL-17 expression, favoring Treg cell development. At low concentrations in concert with IL-6 and IL-21, leads to expression of the IL-17 and IL-23 receptors, favoring differentiation to Th17 cells. Stimulates sustained production of collagen through the activation of CREB3L1 by regulated intramembrane proteolysis (RIP). Mediates SMAD2/3 activation by inducing its phosphorylation and subsequent translocation to the nucleus. Positively regulates odontoblastic differentiation in dental papilla cells, via promotion of IPO7-mediated translocation of phosphorylated SMAD2 to the nucleus and subsequent transcription of target genes. Can induce epithelial-to-mesenchymal transition (EMT) and cell migration in various cell types. The protein is Transforming growth factor beta-1 proprotein (TGFB1) of Ovis aries (Sheep).